The sequence spans 817 residues: MKRAHKAPKASHKAHKRQKVEKKPRPEINVPKRKIRLDDLGWNQVSMPDRLEDFEGFYGLEEIEDVHVVKDAVTGNLSFETTKTDEQIEQDIEKAWQREEEEAKFLEKITFGGEPKNGEDVVEEETAPVEDTVEATQDEDAASWGGFSDDDVAQNGDEQSEDVQMVEEDAPPTPNVVLSTTKADGDGEAEPKKMNKRERAAEKKRIAALAKKTKKPDDDEASEGKTFGPGAFDILANRADDEDDEVDVSAWEELELSTKILESLAKLKFSKPTTIQASTIPEIMAGRDVIGKASTGSGKTLAFGIPIIESYLASKSKSKDVKDKTPLALIIAPTRELAHQITAHLTALCAKGAFEAPLIASVTGGLAVQKQRRQLEKADIIVGTPGRLWEVISTGHGLLEKVKQIRFLVVDEADRLLSQGNYKELGEILKILEKDAPAEGEAEAEETTEVERQTLVFSATFQKGLQQKLAGKAKGGSDNLMSKQQSMEYLLKKINFREEKPKFIDANPSSQMASKLKEGLIECAGTEKDLYLYSLLMFYPKKRALIFTNSISAVRRLTPFLQNLALPALPLHSSMAQKARLRSIERFKERPGSILVATDVAARGLDIPKVELVIHYHLPRAADTYVHRSGRTARAEASGSSILICAPEEVGGVRRLIAKVHARADEAPKSKKTAYFIRTLDIDRRIVARLKPRASISKKLADTVIAKEKKHSEDDTLRQAAEDLGVDYDSEEFEKEAKGKKGRGTGRKKKEKEASEMTKGEQQALRAELRGLLSQRINTGVSARYLTSGGIDVDALMAGEGNMEFLGNVDGLGFDEE.

A compositionally biased stretch (basic residues) spans 1-20 (MKRAHKAPKASHKAHKRQKV). 2 disordered regions span residues 1–29 (MKRA…PEIN) and 110–231 (TFGG…GPGA). 2 stretches are compositionally biased toward acidic residues: residues 120–141 (DVVE…DEDA) and 148–170 (SDDD…EEDA). Basic and acidic residues predominate over residues 183–205 (ADGDGEAEPKKMNKRERAAEKKR). The short motif at 249–277 (SAWEELELSTKILESLAKLKFSKPTTIQA) is the Q motif element. Residues 280 to 479 (IPEIMAGRDV…AGKAKGGSDN (200 aa)) form the Helicase ATP-binding domain. 293 to 300 (ASTGSGKT) is a binding site for ATP. Residues 411 to 414 (DEAD) carry the DEAD box motif. The Helicase C-terminal domain occupies 531 to 675 (YLYSLLMFYP…EAPKSKKTAY (145 aa)). The segment at 731–763 (EEFEKEAKGKKGRGTGRKKKEKEASEMTKGEQQ) is disordered. The span at 738 to 750 (KGKKGRGTGRKKK) shows a compositional bias: basic residues.

This sequence belongs to the DEAD box helicase family. DDX24/MAK5 subfamily.

It localises to the nucleus. Its subcellular location is the nucleolus. It catalyses the reaction ATP + H2O = ADP + phosphate + H(+). ATP-binding RNA helicase involved in the biogenesis of 60S ribosomal subunits and is required for the normal formation of 25S and 5.8S rRNAs. The polypeptide is ATP-dependent RNA helicase MAK5 (MAK5) (Phaeosphaeria nodorum (strain SN15 / ATCC MYA-4574 / FGSC 10173) (Glume blotch fungus)).